A 246-amino-acid polypeptide reads, in one-letter code: UDP-N-acetyl-D-mannosaminuronic acid transferase (246 aa).

This sequence belongs to the glycosyltransferase 26 family.

It carries out the reaction UDP-N-acetyl-alpha-D-mannosaminouronate + N-acetyl-alpha-D-glucosaminyl-di-trans,octa-cis-undecaprenyl diphosphate = beta-D-ManNAcA-(1-&gt;4)-alpha-D-GlcNAc-di-trans,octa-cis-undecaprenyl diphosphate + UDP + H(+). It functions in the pathway bacterial outer membrane biogenesis; enterobacterial common antigen biosynthesis. Functionally, catalyzes the synthesis of Und-PP-GlcNAc-ManNAcA (Lipid II), the second lipid-linked intermediate involved in enterobacterial common antigen (ECA) synthesis. The protein is UDP-N-acetyl-D-mannosaminuronic acid transferase of Shigella flexneri.